The following is a 329-amino-acid chain: MTDTTAPRTSGAVAAGLATIAADGTVLDTWFPAPELSDEPGPSGTERLTAEQAAELLGGGATAAVGPDARRGVEVVAVRTVISSLDEKPVDTHDVYLRLHLLSHRLVKPHGQSLDGIFAHLANVAWTSLGPVAVDDIEKVRLNARAEGLHLQVTSIDKFPRMTDYVAPKGVRIADADRVRLGAHLSAGTTVMHEGFVNFNAGTLGTSMVEGRISAGVVVGDGSDIGGGASTMGTLSGGGNVRIVIGERCLVGAEAGVGIALGDECVVEAGLYVTAGTRVTMPDGQVVKARELSGASNILFRRNSVTGTVEARPNNAVWGGLNEILHSHN.

Mg(2+) contacts are provided by aspartate 177 and glutamate 194. Glutamate 210 (acyl-anhydride intermediate) is an active-site residue. Succinyl-CoA is bound by residues arginine 212, glycine 227, serine 230, alanine 253, 268-269 (EA), glycine 276, lysine 288, and 301-304 (RRNS).

It belongs to the type 2 tetrahydrodipicolinate N-succinyltransferase family. As to quaternary structure, homotrimer.

The protein resides in the cytoplasm. It carries out the reaction (S)-2,3,4,5-tetrahydrodipicolinate + succinyl-CoA + H2O = (S)-2-succinylamino-6-oxoheptanedioate + CoA. It participates in amino-acid biosynthesis; L-lysine biosynthesis via DAP pathway; LL-2,6-diaminopimelate from (S)-tetrahydrodipicolinate (succinylase route): step 1/3. Its function is as follows. Catalyzes the conversion of the cyclic tetrahydrodipicolinate (THDP) into the acyclic N-succinyl-L-2-amino-6-oxopimelate using succinyl-CoA. This is 2,3,4,5-tetrahydropyridine-2,6-dicarboxylate N-succinyltransferase from Streptomyces coelicolor (strain ATCC BAA-471 / A3(2) / M145).